The primary structure comprises 634 residues: TATA box-binding protein-associated factor RNA polymerase I subunit B (634 aa).

The segment at 19–51 adopts an RRN7-type zinc-finger fold; the sequence is LVCEYCGHGSEYAEDDADNGFFTCRQCSAIHTS. Positions 21, 24, 42, and 45 each coordinate Zn(2+). The tract at residues 51 to 80 is B-reader; the sequence is STQNTATNPFDFPMTPAHLSAHRRPTQPTP. The interval 56–117 is disordered; the sequence is ATNPFDFPMT…EPRDFATGAN (62 aa). Residues 77–87 show a composition bias toward pro residues; the sequence is QPTPTPKPFPA. Residues 81–83 are B-linker; that stretch reads TPK. The N-terminal cyclin fold stretch occupies residues 84–281; the sequence is PFPAPRGAAT…DKLLGSSLND (198 aa). Positions 88–98 are enriched in low complexity; the sequence is PRGAATGAAAP. The segment at 282-284 is C-terminal cyclin fold; it reads CPL.

This sequence belongs to the RRN7/TAF1B family.

The protein resides in the nucleus. It is found in the nucleolus. Functionally, component of RNA polymerase I core factor complex that acts as a GTF2B/TFIIB-like factor and plays a key role in multiple steps during transcription initiation such as pre-initiation complex (PIC) assembly and postpolymerase recruitment events in polymerase I (Pol I) transcription. Binds rDNA promoters and plays a role in Pol I recruitment. The chain is TATA box-binding protein-associated factor RNA polymerase I subunit B from Oryza sativa subsp. indica (Rice).